The chain runs to 191 residues: 3-isopropylmalate dehydratase small subunit (191 aa).

It belongs to the LeuD family. LeuD type 1 subfamily. Heterodimer of LeuC and LeuD.

The enzyme catalyses (2R,3S)-3-isopropylmalate = (2S)-2-isopropylmalate. The protein operates within amino-acid biosynthesis; L-leucine biosynthesis; L-leucine from 3-methyl-2-oxobutanoate: step 2/4. Functionally, catalyzes the isomerization between 2-isopropylmalate and 3-isopropylmalate, via the formation of 2-isopropylmaleate. This is 3-isopropylmalate dehydratase small subunit from Anaeromyxobacter dehalogenans (strain 2CP-1 / ATCC BAA-258).